The following is a 682-amino-acid chain: DNA-directed RNA polymerase subunit beta' (682 aa).

Zn(2+)-binding residues include Cys69, Cys71, Cys87, and Cys90. The Mg(2+) site is built by Asp489, Asp491, and Asp493.

This sequence belongs to the RNA polymerase beta' chain family. RpoC1 subfamily. As to quaternary structure, in plastids the minimal PEP RNA polymerase catalytic core is composed of four subunits: alpha, beta, beta', and beta''. When a (nuclear-encoded) sigma factor is associated with the core the holoenzyme is formed, which can initiate transcription. Mg(2+) is required as a cofactor. Zn(2+) serves as cofactor.

It localises to the plastid. It is found in the chloroplast. It catalyses the reaction RNA(n) + a ribonucleoside 5'-triphosphate = RNA(n+1) + diphosphate. DNA-dependent RNA polymerase catalyzes the transcription of DNA into RNA using the four ribonucleoside triphosphates as substrates. This Oryza nivara (Indian wild rice) protein is DNA-directed RNA polymerase subunit beta'.